Here is a 725-residue protein sequence, read N- to C-terminus: Beta-adducin (725 aa).

Positions 1–22 (MSEDTVPEAASPPPSQGQHYFD) are disordered. A phosphoserine mark is found at S11 and S25. Residue T55 is modified to Phosphothreonine. 2 positions are modified to phosphoserine: S60 and S344. An interaction with calmodulin region spans residues 425–444 (KQQKEKTRWLNTPNTYLRVN). Residues 525 to 725 (AEKSRSPSTE…KSKKKEKVES (201 aa)) are disordered. A phosphoserine mark is found at S530 and S532. The residue at position 533 (T533) is a Phosphothreonine. S535 carries the post-translational modification Phosphoserine. The residue at position 561 (T561) is a Phosphothreonine. Positions 566–588 (EEYKKEVERKKLEQEQEGEKDAA) are enriched in basic and acidic residues. 4 positions are modified to phosphoserine: S594, S598, S602, and S606. The span at 596 to 621 (VKSTPASPVQSPTRAGTKSPAVSPSK) shows a compositional bias: polar residues. T612 is modified (phosphothreonine). Phosphoserine is present on residues S614, S618, and S620. Composition is skewed to basic and acidic residues over residues 622–631 (ASEDAKKTEV) and 639–654 (EPEK…KEEE). T674 carries the post-translational modification Phosphothreonine. Residues S678, S685, S688, S692, S696, S698, S700, S702, and S712 each carry the phosphoserine modification. Low complexity predominate over residues 687–700 (TSGPLSPEGSPSKS). Positions 701-725 (PSKKKKKFRTPSFLKKSKKKEKVES) are enriched in basic residues. The interaction with calmodulin stretch occupies residues 703–720 (KKKKKFRTPSFLKKSKKK).

The protein belongs to the aldolase class II family. Adducin subfamily. As to quaternary structure, heterodimer of an alpha and a beta subunit. Found in a complex with ADD2, DMTN and SLC2A1. Interacts with SLC2A1. Found in liver, kidney, spleen, heart and brain.

The protein resides in the cytoplasm. It localises to the cytoskeleton. The protein localises to the cell membrane. Membrane-cytoskeleton-associated protein that promotes the assembly of the spectrin-actin network. Binds to the erythrocyte membrane receptor SLC2A1/GLUT1 and may therefore provide a link between the spectrin cytoskeleton to the plasma membrane. Binds to calmodulin. Calmodulin binds preferentially to the beta subunit. The polypeptide is Beta-adducin (Add2) (Rattus norvegicus (Rat)).